A 420-amino-acid chain; its full sequence is Histidine--tRNA ligase (420 aa).

This sequence belongs to the class-II aminoacyl-tRNA synthetase family. In terms of assembly, homodimer.

It localises to the cytoplasm. It carries out the reaction tRNA(His) + L-histidine + ATP = L-histidyl-tRNA(His) + AMP + diphosphate + H(+). The protein is Histidine--tRNA ligase of Mycobacterium marinum (strain ATCC BAA-535 / M).